Consider the following 370-residue polypeptide: 2-oxoisovalerate dehydrogenase subunit beta, mitochondrial (370 aa).

Residues 1-25 constitute a mitochondrion transit peptide; sequence MLRGNNIKKVNSLLVRSFHSTVGNR. Tyr-130 is a thiamine diphosphate binding site. K(+) contacts are provided by Gly-156, Leu-158, Thr-159, and Glu-209.

As to quaternary structure, heterotetramer of 2 alpha and 2 beta chains. Thiamine diphosphate serves as cofactor.

The protein resides in the mitochondrion matrix. It carries out the reaction N(6)-[(R)-lipoyl]-L-lysyl-[protein] + 3-methyl-2-oxobutanoate + H(+) = N(6)-[(R)-S(8)-2-methylpropanoyldihydrolipoyl]-L-lysyl-[protein] + CO2. Functionally, the branched-chain alpha-keto dehydrogenase complex catalyzes the overall conversion of alpha-keto acids to acyl-CoA and CO(2). It contains multiple copies of three enzymatic components: branched-chain alpha-keto acid decarboxylase (E1), lipoamide acyltransferase (E2) and lipoamide dehydrogenase (E3). The polypeptide is 2-oxoisovalerate dehydrogenase subunit beta, mitochondrial (bkdB) (Dictyostelium discoideum (Social amoeba)).